The primary structure comprises 607 residues: Aspartate--tRNA(Asp/Asn) ligase (607 aa).

Glutamate 173 contributes to the L-aspartate binding site. Positions 197–200 (QLFK) are aspartate. L-aspartate is bound at residue arginine 219. Residues 219–221 (RDE) and glutamine 228 contribute to the ATP site. Histidine 456 is a binding site for L-aspartate. Residue glutamate 498 coordinates ATP. Residue arginine 505 coordinates L-aspartate. 550-553 (GLDR) provides a ligand contact to ATP.

Belongs to the class-II aminoacyl-tRNA synthetase family. Type 1 subfamily. Homodimer.

It is found in the cytoplasm. It carries out the reaction tRNA(Asx) + L-aspartate + ATP = L-aspartyl-tRNA(Asx) + AMP + diphosphate. Its function is as follows. Aspartyl-tRNA synthetase with relaxed tRNA specificity since it is able to aspartylate not only its cognate tRNA(Asp) but also tRNA(Asn). Reaction proceeds in two steps: L-aspartate is first activated by ATP to form Asp-AMP and then transferred to the acceptor end of tRNA(Asp/Asn). This chain is Aspartate--tRNA(Asp/Asn) ligase, found in Magnetococcus marinus (strain ATCC BAA-1437 / JCM 17883 / MC-1).